A 290-amino-acid chain; its full sequence is Glycine--tRNA ligase alpha subunit (290 aa).

This sequence belongs to the class-II aminoacyl-tRNA synthetase family. As to quaternary structure, tetramer of two alpha and two beta subunits.

It localises to the cytoplasm. It carries out the reaction tRNA(Gly) + glycine + ATP = glycyl-tRNA(Gly) + AMP + diphosphate. The chain is Glycine--tRNA ligase alpha subunit from Maridesulfovibrio salexigens (strain ATCC 14822 / DSM 2638 / NCIMB 8403 / VKM B-1763) (Desulfovibrio salexigens).